Consider the following 495-residue polypeptide: Probable aspartic-type endopeptidase OPSB (495 aa).

Positions 1-19 are cleaved as a signal peptide; sequence MRGDSFIWSLATAIPLLST. Residues 73 to 408 form the Peptidase A1 domain; sequence YFCNLTLGTP…DLDNNEISIA (336 aa). N-linked (GlcNAc...) asparagine glycosylation is present at Asn76. Residue Asp91 is part of the active site. Residue Asn136 is glycosylated (N-linked (GlcNAc...) asparagine). Asp290 is a catalytic residue. N-linked (GlcNAc...) asparagine glycosylation is present at Asn413. The disordered stretch occupies residues 447–470; sequence ATGLPGVETGVPGSRPPSSKAAGQ. Ala467 carries the GPI-anchor amidated alanine lipid modification. The propeptide at 468–495 is removed in mature form; sequence AGQAKRPDFVLGVAAVGLAGAGMLFAAM.

It belongs to the peptidase A1 family.

Its subcellular location is the cell membrane. Probable GPI-anchored aspartic-type endopeptidase which contributes to virulence. The sequence is that of Probable aspartic-type endopeptidase OPSB (OPSB) from Arthroderma benhamiae (strain ATCC MYA-4681 / CBS 112371) (Trichophyton mentagrophytes).